The primary structure comprises 718 residues: MEEFDRSISFDGRDIRLKLGLLAPQAGGSVLIQSGDTAVLVTATKAASREGVDFLPLTVDYEERLYAAGRIPGGFLRREGRPPEKAILISRLIDRPLRPLFPHWLRDDIQVIATTLSMDEEVPPDVLAVTGASLAVILAEIPFFGPMAAVRVGLVGDDFIINPTYKEINTGDLDLVVAGSPDGVVMVEAGANQLPEQDIIEAIDFGYEAVRDLIAAQQDVMETLGVKLATLDPPPVNESVLEFIKTQTADEIKKVLSQYDLDKNGRDTALDEIKAAKVEEVIASLPEEDPIKVATTEEAKLVDTLFKDVTKKLMRSQIINEGVRVDGRQLDQVRPISCRVGLLPPRVHGSGLFCRGLTQVLSIATLGTPGDAQELADDLHPEDEKRYLHHYNFPPYSVGETRPMRSPGRREIGHGALAERAILPVLPTQQEFPYVVRVVSEVLSSNGSTSMGSVCGSTLALMDAGVPIIKPVSGAAMGLIKDGDEVRILTDIQGIEDFLGDMDFKVAGTDNGITALQMDMKITGLSMDIVAKAIEQARPARLHILDKMLSVIDSPRPELSPYAPRLLTMRIDPDMIGLVIGPGGKTVKSITEQTKTKIDIDDDGTVTISASEAEQAERAKQLIHNMTRKLNEGEVYVGRVTRIIQIGAFVEIMPGKEGMIHISQLAEGRVGKVEDELAVGDEVVVKVREIDNKGRLNLTRLGIHPDEAAAARKAAALL.

The Mg(2+) site is built by aspartate 497 and aspartate 503. One can recognise a KH domain in the interval 564-623 (PRLLTMRIDPDMIGLVIGPGGKTVKSITEQTKTKIDIDDDGTVTISASEAEQAERAKQLI). The S1 motif domain maps to 633–701 (GEVYVGRVTR…NKGRLNLTRL (69 aa)).

The protein belongs to the polyribonucleotide nucleotidyltransferase family. It depends on Mg(2+) as a cofactor.

It is found in the cytoplasm. It catalyses the reaction RNA(n+1) + phosphate = RNA(n) + a ribonucleoside 5'-diphosphate. In terms of biological role, involved in mRNA degradation. Catalyzes the phosphorolysis of single-stranded polyribonucleotides processively in the 3'- to 5'-direction. The sequence is that of Polyribonucleotide nucleotidyltransferase from Gloeothece citriformis (strain PCC 7424) (Cyanothece sp. (strain PCC 7424)).